The primary structure comprises 208 residues: Small ribosomal subunit protein uS4 (208 aa).

The region spanning 98–161 is the S4 RNA-binding domain; sequence RRLDNVIYRL…RKIPVLAEAQ (64 aa).

It belongs to the universal ribosomal protein uS4 family. As to quaternary structure, part of the 30S ribosomal subunit. Contacts protein S5. The interaction surface between S4 and S5 is involved in control of translational fidelity.

In terms of biological role, one of the primary rRNA binding proteins, it binds directly to 16S rRNA where it nucleates assembly of the body of the 30S subunit. Its function is as follows. With S5 and S12 plays an important role in translational accuracy. The protein is Small ribosomal subunit protein uS4 of Nitratidesulfovibrio vulgaris (strain ATCC 29579 / DSM 644 / CCUG 34227 / NCIMB 8303 / VKM B-1760 / Hildenborough) (Desulfovibrio vulgaris).